Here is a 127-residue protein sequence, read N- to C-terminus: Large ribosomal subunit protein eL32B (127 aa).

Belongs to the eukaryotic ribosomal protein eL32 family. Component of the large ribosomal subunit (LSU). Mature yeast ribosomes consist of a small (40S) and a large (60S) subunit. The 40S small subunit contains 1 molecule of ribosomal RNA (18S rRNA) and at least 33 different proteins. The large 60S subunit contains 3 rRNA molecules (25S, 5.8S and 5S rRNA) and at least 46 different proteins.

It is found in the cytoplasm. The protein localises to the nucleus. It localises to the nucleolus. Component of the ribosome, a large ribonucleoprotein complex responsible for the synthesis of proteins in the cell. The small ribosomal subunit (SSU) binds messenger RNAs (mRNAs) and translates the encoded message by selecting cognate aminoacyl-transfer RNA (tRNA) molecules. The large subunit (LSU) contains the ribosomal catalytic site termed the peptidyl transferase center (PTC), which catalyzes the formation of peptide bonds, thereby polymerizing the amino acids delivered by tRNAs into a polypeptide chain. The nascent polypeptides leave the ribosome through a tunnel in the LSU and interact with protein factors that function in enzymatic processing, targeting, and the membrane insertion of nascent chains at the exit of the ribosomal tunnel. The polypeptide is Large ribosomal subunit protein eL32B (rpl3201) (Schizosaccharomyces pombe (strain 972 / ATCC 24843) (Fission yeast)).